The sequence spans 37 residues: Large ribosomal subunit protein bL36 (37 aa).

This sequence belongs to the bacterial ribosomal protein bL36 family.

The protein is Large ribosomal subunit protein bL36 of Leptospira interrogans serogroup Icterohaemorrhagiae serovar copenhageni (strain Fiocruz L1-130).